Consider the following 431-residue polypeptide: Enolase (431 aa).

Gln163 serves as a coordination point for (2R)-2-phosphoglycerate. Glu205 acts as the Proton donor in catalysis. The Mg(2+) site is built by Asp242, Glu288, and Asp315. (2R)-2-phosphoglycerate is bound by residues Lys340, Arg369, Ser370, and Lys391. Catalysis depends on Lys340, which acts as the Proton acceptor.

Belongs to the enolase family. It depends on Mg(2+) as a cofactor.

It localises to the cytoplasm. Its subcellular location is the secreted. It is found in the cell surface. The enzyme catalyses (2R)-2-phosphoglycerate = phosphoenolpyruvate + H2O. It functions in the pathway carbohydrate degradation; glycolysis; pyruvate from D-glyceraldehyde 3-phosphate: step 4/5. Functionally, catalyzes the reversible conversion of 2-phosphoglycerate (2-PG) into phosphoenolpyruvate (PEP). It is essential for the degradation of carbohydrates via glycolysis. The protein is Enolase of Bacillus cereus (strain ZK / E33L).